The following is a 78-amino-acid chain: Major outer membrane lipoprotein Lpp (78 aa).

An N-terminal signal peptide occupies residues Met-1 to Gly-20. Cys-21 carries the N-palmitoyl cysteine lipid modification. Cys-21 carries S-diacylglycerol cysteine lipidation. Repeats lie at residues Thr-24–Ile-34 and Asn-38–Val-48. Residues Val-27–Ser-75 are a coiled coil. An N6-murein peptidoglycan lysine modification is found at Lys-78.

It belongs to the Lpp family. In terms of assembly, homotrimer.

It is found in the cell outer membrane. Its subcellular location is the secreted. The protein localises to the cell wall. A highly abundant outer membrane lipoprotein that controls the distance between the inner and outer membranes. The only protein known to be covalently linked to the peptidoglycan network (PGN). Also non-covalently binds the PGN. The link between the cell outer membrane and PGN contributes to maintenance of the structural and functional integrity of the cell envelope, and maintains the correct distance between the PGN and the outer membrane. This is Major outer membrane lipoprotein Lpp from Photorhabdus laumondii subsp. laumondii (strain DSM 15139 / CIP 105565 / TT01) (Photorhabdus luminescens subsp. laumondii).